The chain runs to 320 residues: N-acetylneuraminate lyase (320 aa).

Residues threonine 51 and threonine 52 each contribute to the aceneuramate site. The active-site Proton donor is the tyrosine 143. The active-site Schiff-base intermediate with substrate is the lysine 173. Residues serine 175, glycine 199, aspartate 201, glutamate 202, and serine 218 each coordinate aceneuramate.

Belongs to the DapA family. NanA subfamily. Homotetramer.

The protein localises to the cytoplasm. It carries out the reaction aceneuramate = aldehydo-N-acetyl-D-mannosamine + pyruvate. The protein operates within amino-sugar metabolism; N-acetylneuraminate degradation. Catalyzes the cleavage of N-acetylneuraminic acid (sialic acid) to form pyruvate and N-acetylmannosamine via a Schiff base intermediate. It prevents sialic acids from being recycled and returning to the cell surface. Involved in the N-glycolylneuraminic acid (Neu5Gc) degradation pathway. The sequence is that of N-acetylneuraminate lyase from Pongo abelii (Sumatran orangutan).